We begin with the raw amino-acid sequence, 222 residues long: Cytidylate kinase (222 aa).

7–15 (GPSASGKSS) provides a ligand contact to ATP.

The protein belongs to the cytidylate kinase family. Type 1 subfamily.

It localises to the cytoplasm. It catalyses the reaction CMP + ATP = CDP + ADP. The enzyme catalyses dCMP + ATP = dCDP + ADP. This is Cytidylate kinase from Borrelia turicatae (strain 91E135).